Consider the following 412-residue polypeptide: Imidazolonepropionase (412 aa).

Fe(3+)-binding residues include H71 and H73. Zn(2+) is bound by residues H71 and H73. R80, Y143, and H176 together coordinate 4-imidazolone-5-propanoate. Y143 contacts N-formimidoyl-L-glutamate. A Fe(3+)-binding site is contributed by H241. A Zn(2+)-binding site is contributed by H241. Q244 serves as a coordination point for 4-imidazolone-5-propanoate. Fe(3+) is bound at residue D316. A Zn(2+)-binding site is contributed by D316. N-formimidoyl-L-glutamate-binding residues include N318 and G320. A 4-imidazolone-5-propanoate-binding site is contributed by T321.

Belongs to the metallo-dependent hydrolases superfamily. HutI family. Requires Zn(2+) as cofactor. Fe(3+) serves as cofactor.

It is found in the cytoplasm. The enzyme catalyses 4-imidazolone-5-propanoate + H2O = N-formimidoyl-L-glutamate. Its pathway is amino-acid degradation; L-histidine degradation into L-glutamate; N-formimidoyl-L-glutamate from L-histidine: step 3/3. Functionally, catalyzes the hydrolytic cleavage of the carbon-nitrogen bond in imidazolone-5-propanoate to yield N-formimidoyl-L-glutamate. It is the third step in the universal histidine degradation pathway. The sequence is that of Imidazolonepropionase from Aromatoleum aromaticum (strain DSM 19018 / LMG 30748 / EbN1) (Azoarcus sp. (strain EbN1)).